A 458-amino-acid polypeptide reads, in one-letter code: COBRA-like protein 2 (458 aa).

An N-terminal signal peptide occupies residues 1–29 (MARFLLGAAAIALLAGVSSLLLMVPFAEA). 8 N-linked (GlcNAc...) asparagine glycosylation sites follow: Asn-38, Asn-163, Asn-171, Asn-211, Asn-236, Asn-318, Asn-333, and Asn-352. A helical membrane pass occupies residues 430–450 (VFLLMSFLVCGTLAFLHNHLV).

Belongs to the COBRA family.

It localises to the membrane. The chain is COBRA-like protein 2 (BC1L2) from Oryza sativa subsp. japonica (Rice).